Consider the following 279-residue polypeptide: Movement protein (279 aa).

Positions 246–279 (SESEELNVESPPAAIGSSSASRSEAFRPQVVNGL) are disordered. The segment covering 254 to 268 (ESPPAAIGSSSASRS) has biased composition (low complexity).

This sequence belongs to the cucumovirus movement protein family.

The protein localises to the host cell junction. It is found in the host plasmodesma. Transports viral genome to neighboring plant cells directly through plasmosdesmata, without any budding. The movement protein allows efficient cell to cell propagation, by bypassing the host cell wall barrier. Acts by forming a tubular structure at the host plasmodesmata, enlarging it enough to allow free passage of virion capsids. The chain is Movement protein from Cucumber mosaic virus (strain CS) (CMV).